A 533-amino-acid polypeptide reads, in one-letter code: Peptide chain release factor 3 (533 aa).

Positions 9–284 (ARRRTFAIIS…ALCQLSPPPL (276 aa)) constitute a tr-type G domain. GTP-binding positions include 18 to 25 (SHPDAGKT), 95 to 99 (DTPGH), and 149 to 152 (NKLD).

The protein belongs to the TRAFAC class translation factor GTPase superfamily. Classic translation factor GTPase family. PrfC subfamily.

The protein resides in the cytoplasm. Its function is as follows. Increases the formation of ribosomal termination complexes and stimulates activities of RF-1 and RF-2. It binds guanine nucleotides and has strong preference for UGA stop codons. It may interact directly with the ribosome. The stimulation of RF-1 and RF-2 is significantly reduced by GTP and GDP, but not by GMP. This chain is Peptide chain release factor 3, found in Cupriavidus pinatubonensis (strain JMP 134 / LMG 1197) (Cupriavidus necator (strain JMP 134)).